The following is a 438-amino-acid chain: Aspartate--tRNA(Asp) ligase (438 aa).

An L-aspartate-binding site is contributed by E170. The segment at 192–195 (QLYK) is aspartate. An L-aspartate-binding site is contributed by R214. ATP contacts are provided by residues 214 to 216 (RAE), 222 to 224 (RHL), and E361. Mg(2+) contacts are provided by E361 and S364. Residues S364 and R368 each coordinate L-aspartate. 409-412 (GAER) serves as a coordination point for ATP.

This sequence belongs to the class-II aminoacyl-tRNA synthetase family. Type 2 subfamily. In terms of assembly, homodimer. Mg(2+) is required as a cofactor.

The protein localises to the cytoplasm. The enzyme catalyses tRNA(Asp) + L-aspartate + ATP = L-aspartyl-tRNA(Asp) + AMP + diphosphate. In terms of biological role, catalyzes the attachment of L-aspartate to tRNA(Asp) in a two-step reaction: L-aspartate is first activated by ATP to form Asp-AMP and then transferred to the acceptor end of tRNA(Asp). In Pyrococcus furiosus (strain ATCC 43587 / DSM 3638 / JCM 8422 / Vc1), this protein is Aspartate--tRNA(Asp) ligase.